The sequence spans 240 residues: Adapter protein MecA (240 aa).

Positions 118–138 (EQRAQQQKHSHKSEQKQTKQR) are disordered.

The protein belongs to the MecA family. Homodimer.

Enables the recognition and targeting of unfolded and aggregated proteins to the ClpC protease or to other proteins involved in proteolysis. The polypeptide is Adapter protein MecA (Staphylococcus haemolyticus (strain JCSC1435)).